The following is a 324-amino-acid chain: Glycerol-3-phosphate dehydrogenase [NAD(P)+] (324 aa).

NADPH contacts are provided by Trp15, Arg35, and Lys101. Sn-glycerol 3-phosphate-binding residues include Lys101 and Gly129. Ala133 serves as a coordination point for NADPH. Sn-glycerol 3-phosphate contacts are provided by Lys184, Asp237, Ser247, Arg248, and Asn249. Lys184 functions as the Proton acceptor in the catalytic mechanism. Residue Arg248 participates in NADPH binding. Residues Val272 and Glu274 each coordinate NADPH.

Belongs to the NAD-dependent glycerol-3-phosphate dehydrogenase family.

It is found in the cytoplasm. It carries out the reaction sn-glycerol 3-phosphate + NAD(+) = dihydroxyacetone phosphate + NADH + H(+). The catalysed reaction is sn-glycerol 3-phosphate + NADP(+) = dihydroxyacetone phosphate + NADPH + H(+). Its pathway is membrane lipid metabolism; glycerophospholipid metabolism. Its function is as follows. Catalyzes the reduction of the glycolytic intermediate dihydroxyacetone phosphate (DHAP) to sn-glycerol 3-phosphate (G3P), the key precursor for phospholipid synthesis. This chain is Glycerol-3-phosphate dehydrogenase [NAD(P)+], found in Gluconobacter oxydans (strain 621H) (Gluconobacter suboxydans).